The chain runs to 331 residues: Glyceraldehyde-3-phosphate dehydrogenase (331 aa).

Residues 12-13 (RI), Asp34, Arg78, and Thr120 contribute to the NAD(+) site. D-glyceraldehyde 3-phosphate is bound by residues 149-151 (SCT), Thr180, 209-210 (TG), and Arg232. The Nucleophile role is filled by Cys150. Residue Asn314 coordinates NAD(+).

The protein belongs to the glyceraldehyde-3-phosphate dehydrogenase family. Homotetramer.

The protein resides in the cytoplasm. It carries out the reaction D-glyceraldehyde 3-phosphate + phosphate + NAD(+) = (2R)-3-phospho-glyceroyl phosphate + NADH + H(+). It functions in the pathway carbohydrate degradation; glycolysis; pyruvate from D-glyceraldehyde 3-phosphate: step 1/5. In terms of biological role, catalyzes the oxidative phosphorylation of glyceraldehyde 3-phosphate (G3P) to 1,3-bisphosphoglycerate (BPG) using the cofactor NAD. The first reaction step involves the formation of a hemiacetal intermediate between G3P and a cysteine residue, and this hemiacetal intermediate is then oxidized to a thioester, with concomitant reduction of NAD to NADH. The reduced NADH is then exchanged with the second NAD, and the thioester is attacked by a nucleophilic inorganic phosphate to produce BPG. This Escherichia fergusonii (strain ATCC 35469 / DSM 13698 / CCUG 18766 / IAM 14443 / JCM 21226 / LMG 7866 / NBRC 102419 / NCTC 12128 / CDC 0568-73) protein is Glyceraldehyde-3-phosphate dehydrogenase (gapA).